A 293-amino-acid polypeptide reads, in one-letter code: Glycine--tRNA ligase alpha subunit (293 aa).

It belongs to the class-II aminoacyl-tRNA synthetase family. Tetramer of two alpha and two beta subunits.

The protein localises to the cytoplasm. The catalysed reaction is tRNA(Gly) + glycine + ATP = glycyl-tRNA(Gly) + AMP + diphosphate. The sequence is that of Glycine--tRNA ligase alpha subunit from Picosynechococcus sp. (strain ATCC 27264 / PCC 7002 / PR-6) (Agmenellum quadruplicatum).